A 488-amino-acid polypeptide reads, in one-letter code: Ribulose bisphosphate carboxylase large chain (488 aa).

Positions 127 and 177 each coordinate substrate. Catalysis depends on K179, which acts as the Proton acceptor. K181 is a binding site for substrate. K205, D207, and E208 together coordinate Mg(2+). At K205 the chain carries N6-carboxylysine. H297 (proton acceptor) is an active-site residue. Residues R298, H330, and S382 each coordinate substrate.

It belongs to the RuBisCO large chain family. Type I subfamily. In terms of assembly, heterohexadecamer of 8 large chains and 8 small chains. It depends on Mg(2+) as a cofactor.

It is found in the plastid. It localises to the chloroplast. The catalysed reaction is 2 (2R)-3-phosphoglycerate + 2 H(+) = D-ribulose 1,5-bisphosphate + CO2 + H2O. The enzyme catalyses D-ribulose 1,5-bisphosphate + O2 = 2-phosphoglycolate + (2R)-3-phosphoglycerate + 2 H(+). Its function is as follows. RuBisCO catalyzes two reactions: the carboxylation of D-ribulose 1,5-bisphosphate, the primary event in carbon dioxide fixation, as well as the oxidative fragmentation of the pentose substrate in the photorespiration process. Both reactions occur simultaneously and in competition at the same active site. The protein is Ribulose bisphosphate carboxylase large chain of Pylaiella littoralis (Seaweed).